We begin with the raw amino-acid sequence, 445 residues long: N-succinylarginine dihydrolase (445 aa).

Substrate contacts are provided by residues 19–28 (AGLSFGNVAS), Asn110, and 137–138 (HR). Glu174 is a catalytic residue. Arg214 provides a ligand contact to substrate. His250 is an active-site residue. Asp252 and Asn363 together coordinate substrate. Residue Cys369 is the Nucleophile of the active site.

It belongs to the succinylarginine dihydrolase family. Homodimer.

It catalyses the reaction N(2)-succinyl-L-arginine + 2 H2O + 2 H(+) = N(2)-succinyl-L-ornithine + 2 NH4(+) + CO2. The protein operates within amino-acid degradation; L-arginine degradation via AST pathway; L-glutamate and succinate from L-arginine: step 2/5. Its function is as follows. Catalyzes the hydrolysis of N(2)-succinylarginine into N(2)-succinylornithine, ammonia and CO(2). This is N-succinylarginine dihydrolase from Shewanella sediminis (strain HAW-EB3).